A 490-amino-acid polypeptide reads, in one-letter code: Betaine aldehyde dehydrogenase (490 aa).

K(+) is bound by residues T26, I27, and D93. Position 150 to 152 (150 to 152) interacts with NAD(+); that stretch reads GAW. Catalysis depends on K162, which acts as the Charge relay system. An NAD(+)-binding site is contributed by 176–179; the sequence is KPSE. V180 provides a ligand contact to K(+). Residue 230–233 coordinates NAD(+); the sequence is GVAS. L246 is a K(+) binding site. The active-site Proton acceptor is E252. G254, C286, and E387 together coordinate NAD(+). C286 (nucleophile) is an active-site residue. C286 carries the post-translational modification Cysteine sulfenic acid (-SOH). Residues K457 and G460 each coordinate K(+). The active-site Charge relay system is the E464.

It belongs to the aldehyde dehydrogenase family. As to quaternary structure, dimer of dimers. K(+) serves as cofactor.

The catalysed reaction is betaine aldehyde + NAD(+) + H2O = glycine betaine + NADH + 2 H(+). It functions in the pathway amine and polyamine biosynthesis; betaine biosynthesis via choline pathway; betaine from betaine aldehyde: step 1/1. Involved in the biosynthesis of the osmoprotectant glycine betaine. Catalyzes the irreversible oxidation of betaine aldehyde to the corresponding acid. This chain is Betaine aldehyde dehydrogenase, found in Klebsiella pneumoniae (strain 342).